A 272-amino-acid chain; its full sequence is 2-succinyl-6-hydroxy-2,4-cyclohexadiene-1-carboxylate synthase (272 aa).

This sequence belongs to the AB hydrolase superfamily. MenH family. As to quaternary structure, monomer.

It catalyses the reaction 5-enolpyruvoyl-6-hydroxy-2-succinyl-cyclohex-3-ene-1-carboxylate = (1R,6R)-6-hydroxy-2-succinyl-cyclohexa-2,4-diene-1-carboxylate + pyruvate. The protein operates within quinol/quinone metabolism; 1,4-dihydroxy-2-naphthoate biosynthesis; 1,4-dihydroxy-2-naphthoate from chorismate: step 3/7. It functions in the pathway quinol/quinone metabolism; menaquinone biosynthesis. Its function is as follows. Catalyzes a proton abstraction reaction that results in 2,5-elimination of pyruvate from 2-succinyl-5-enolpyruvyl-6-hydroxy-3-cyclohexene-1-carboxylate (SEPHCHC) and the formation of 2-succinyl-6-hydroxy-2,4-cyclohexadiene-1-carboxylate (SHCHC). The polypeptide is 2-succinyl-6-hydroxy-2,4-cyclohexadiene-1-carboxylate synthase (Yersinia pseudotuberculosis serotype IB (strain PB1/+)).